A 534-amino-acid polypeptide reads, in one-letter code: Phosphoenolpyruvate carboxykinase (ATP) (534 aa).

Residues arginine 59, tyrosine 200, and lysine 206 each coordinate substrate. Residues lysine 206, histidine 225, and 242 to 250 (GLSGTGKTT) contribute to the ATP site. Positions 206 and 225 each coordinate Mn(2+). Mn(2+) is bound at residue aspartate 263. ATP-binding positions include glutamate 291, arginine 327, 443-444 (RI), and threonine 449. Arginine 327 contacts substrate.

Belongs to the phosphoenolpyruvate carboxykinase (ATP) family. It depends on Mn(2+) as a cofactor.

The protein localises to the cytoplasm. The catalysed reaction is oxaloacetate + ATP = phosphoenolpyruvate + ADP + CO2. It participates in carbohydrate biosynthesis; gluconeogenesis. Functionally, involved in the gluconeogenesis. Catalyzes the conversion of oxaloacetate (OAA) to phosphoenolpyruvate (PEP) through direct phosphoryl transfer between the nucleoside triphosphate and OAA. This Lachnospira eligens (strain ATCC 27750 / DSM 3376 / VPI C15-48 / C15-B4) (Eubacterium eligens) protein is Phosphoenolpyruvate carboxykinase (ATP).